A 225-amino-acid polypeptide reads, in one-letter code: Probable GTP-binding protein EngB (225 aa).

One can recognise an EngB-type G domain in the interval Gly40–Ala224. GTP is bound by residues Gly48–Ser55, Gly75–Glu79, Asp102–Gly105, Thr169–Asp172, and Thr203–Ser205. Mg(2+)-binding residues include Ser55 and Thr77.

The protein belongs to the TRAFAC class TrmE-Era-EngA-EngB-Septin-like GTPase superfamily. EngB GTPase family. It depends on Mg(2+) as a cofactor.

Its function is as follows. Necessary for normal cell division and for the maintenance of normal septation. This Chelativorans sp. (strain BNC1) protein is Probable GTP-binding protein EngB.